A 344-amino-acid chain; its full sequence is MKKWLIIAVSLAIAIVLFMYTKGEAKAAGMTVGYTTGDTASYNSLTKYHTYMNAIATDTFAFEKNGQIIGDAPTKQLTYAKKKKIKTWAVISNYNDAIYDFDGDLASRVMSNKTAKKRFTDQLITLAKKHSYYGINIDFEAVNPEDRAAYSNFIQYVSQALNKKHIKTMVSVPAKSADDKNDDWSWPYDYAKIGKYADFVQVMTYDEHGIWGEPGSVASTNWIKSSLQFSVKKIKANKVIMGIPAYGYDWDVKDGSTSTIREWNELKSLIKKQKAKPAFNKKSGSMTFSYVDKKKHKHVVWYENEKTVQTKSHLAKQYKIAGVSVYALGNESESFWKAIRKGTK.

The first 27 residues, 1-27, serve as a signal peptide directing secretion; it reads MKKWLIIAVSLAIAIVLFMYTKGEAKA. The 316-residue stretch at 29 to 344 folds into the GH18 domain; it reads GMTVGYTTGD…FWKAIRKGTK (316 aa). Catalysis depends on Glu140, which acts as the Proton donor.

Belongs to the glycosyl hydrolase 18 family.

This is an uncharacterized protein from Bacillus subtilis (strain 168).